The sequence spans 1020 residues: Protein SCAR3 (1020 aa).

3 disordered regions span residues 167 to 198 (NLSQGNKKFQKDKKHCKMKKKKTSSRSRDMSR), 351 to 382 (DEKPSYGEGIGGVDFHSKDNENDKSESGLRKR), and 802 to 827 (DYLSDNHSLSNSEPWEESSDSHGRKE). Basic residues predominate over residues 174-191 (KFQKDKKHCKMKKKKTSS). Over residues 365-382 (FHSKDNENDKSESGLRKR) the composition is skewed to basic and acidic residues. A compositionally biased stretch (polar residues) spans 802-814 (DYLSDNHSLSNSE). In terms of domain architecture, WH2 spans 954–972 (ETGDFLQQIRTQQFNLRPV).

It belongs to the SCAR/WAVE family. Binds BRK1. Interacts with SPK1, ABI1, ABI2, ABI3 and ABI4. Expressed in expanding cotyledons, expanding leaves and expanding siliques containing developing embryos. Detected in unopened flower buds. Reduced expression in mature leaves and mature cotyledons.

It localises to the cytoplasm. Its subcellular location is the cytoskeleton. In terms of biological role, involved in regulation of actin and microtubule organization. Part of a WAVE complex that activates the Arp2/3 complex. Regulates trichome branch positioning and expansion. This Arabidopsis thaliana (Mouse-ear cress) protein is Protein SCAR3 (SCAR3).